A 244-amino-acid polypeptide reads, in one-letter code: Mannose-binding protein C (244 aa).

The first 18 residues, 1–18, serve as a signal peptide directing secretion; that stretch reads MSLFTSFLLLCVLTAVYA. The region spanning 38 to 96 is the Collagen-like domain; the sequence is GLNGFPGKDGHDGAKGEKGEPGQGLRGLQGPPGKVGPAGPPGNPGSKGATGPKGDRGES. Pro-43 bears the 4-hydroxyproline mark. Residues 43–99 form a disordered region; the sequence is PGKDGHDGAKGEKGEPGQGLRGLQGPPGKVGPAGPPGNPGSKGATGPKGDRGESVEF. The segment covering 45–57 has biased composition (basic and acidic residues); it reads KDGHDGAKGEKGE. 4-hydroxyproline occurs at positions 58, 69, 78, and 81. Over residues 65–74 the composition is skewed to low complexity; the sequence is LQGPPGKVGP. Residues 108–126 are a coiled coil; it reads IAALRSELRAMRKWVLLSM. Residues 129–241 enclose the C-type lectin domain; the sequence is NVGKKYFMSS…CSDSFLVVCE (113 aa). 2 disulfides stabilise this stretch: Cys-151–Cys-240 and Cys-218–Cys-232.

As to quaternary structure, oligomeric complex of 3 or more homotrimers. Interacts with MASP1 and MASP2. Interacts with MEP1A and MEP1B and may inhibit their catalytic activity.

It localises to the secreted. In terms of biological role, calcium-dependent lectin involved in innate immune defense. Binds mannose, fucose and N-acetylglucosamine on different microorganisms and activates the lectin complement pathway. Binds to late apoptotic cells, as well as to apoptotic blebs and to necrotic cells, but not to early apoptotic cells, facilitating their uptake by macrophages. This Rattus norvegicus (Rat) protein is Mannose-binding protein C (Mbl2).